We begin with the raw amino-acid sequence, 427 residues long: Gamma-glutamyl phosphate reductase (427 aa).

Belongs to the gamma-glutamyl phosphate reductase family.

The protein resides in the cytoplasm. It carries out the reaction L-glutamate 5-semialdehyde + phosphate + NADP(+) = L-glutamyl 5-phosphate + NADPH + H(+). It functions in the pathway amino-acid biosynthesis; L-proline biosynthesis; L-glutamate 5-semialdehyde from L-glutamate: step 2/2. Functionally, catalyzes the NADPH-dependent reduction of L-glutamate 5-phosphate into L-glutamate 5-semialdehyde and phosphate. The product spontaneously undergoes cyclization to form 1-pyrroline-5-carboxylate. This Rhodospirillum rubrum (strain ATCC 11170 / ATH 1.1.1 / DSM 467 / LMG 4362 / NCIMB 8255 / S1) protein is Gamma-glutamyl phosphate reductase.